The chain runs to 466 residues: Ribulose bisphosphate carboxylase large chain (466 aa).

Position 5 is an N6,N6,N6-trimethyllysine (K5). N114 and T164 together coordinate substrate. Catalysis depends on K166, which acts as the Proton acceptor. K168 serves as a coordination point for substrate. Mg(2+) is bound by residues K192, D194, and E195. Residue K192 is modified to N6-carboxylysine. H285 (proton acceptor) is an active-site residue. The substrate site is built by R286, H318, and S370.

The protein belongs to the RuBisCO large chain family. Type I subfamily. As to quaternary structure, heterohexadecamer of 8 large chains and 8 small chains; disulfide-linked. The disulfide link is formed within the large subunit homodimers. Requires Mg(2+) as cofactor. The disulfide bond which can form in the large chain dimeric partners within the hexadecamer appears to be associated with oxidative stress and protein turnover.

The protein localises to the plastid. Its subcellular location is the chloroplast. The enzyme catalyses 2 (2R)-3-phosphoglycerate + 2 H(+) = D-ribulose 1,5-bisphosphate + CO2 + H2O. It catalyses the reaction D-ribulose 1,5-bisphosphate + O2 = 2-phosphoglycolate + (2R)-3-phosphoglycerate + 2 H(+). Its function is as follows. RuBisCO catalyzes two reactions: the carboxylation of D-ribulose 1,5-bisphosphate, the primary event in carbon dioxide fixation, as well as the oxidative fragmentation of the pentose substrate in the photorespiration process. Both reactions occur simultaneously and in competition at the same active site. This chain is Ribulose bisphosphate carboxylase large chain, found in Poliothyrsis sinensis (Chinese pearlbloom tree).